The sequence spans 600 residues: Aspartate--tRNA(Asp/Asn) ligase (600 aa).

L-aspartate is bound at residue glutamate 176. The segment at 200–203 (QQFK) is aspartate. Arginine 222 and histidine 452 together coordinate L-aspartate. ATP is bound at residue 222–224 (RDE). Residue glutamate 490 participates in ATP binding. L-aspartate is bound at residue arginine 497. 542–545 (GIDR) contacts ATP.

The protein belongs to the class-II aminoacyl-tRNA synthetase family. Type 1 subfamily. As to quaternary structure, homodimer.

The protein resides in the cytoplasm. The enzyme catalyses tRNA(Asx) + L-aspartate + ATP = L-aspartyl-tRNA(Asx) + AMP + diphosphate. Aspartyl-tRNA synthetase with relaxed tRNA specificity since it is able to aspartylate not only its cognate tRNA(Asp) but also tRNA(Asn). Reaction proceeds in two steps: L-aspartate is first activated by ATP to form Asp-AMP and then transferred to the acceptor end of tRNA(Asp/Asn). The chain is Aspartate--tRNA(Asp/Asn) ligase from Rickettsia felis (strain ATCC VR-1525 / URRWXCal2) (Rickettsia azadi).